The chain runs to 165 residues: Small ribosomal subunit protein uS5 (165 aa).

An S5 DRBM domain is found at 10 to 73 (LVEKLVAVDR…EAARRNMITV (64 aa)).

This sequence belongs to the universal ribosomal protein uS5 family. As to quaternary structure, part of the 30S ribosomal subunit. Contacts proteins S4 and S8.

With S4 and S12 plays an important role in translational accuracy. In terms of biological role, located at the back of the 30S subunit body where it stabilizes the conformation of the head with respect to the body. This Acinetobacter baumannii (strain AB307-0294) protein is Small ribosomal subunit protein uS5.